The sequence spans 122 residues: Large ribosomal subunit protein uL14 (122 aa).

This sequence belongs to the universal ribosomal protein uL14 family. Part of the 50S ribosomal subunit. Forms a cluster with proteins L3 and L19. In the 70S ribosome, L14 and L19 interact and together make contacts with the 16S rRNA in bridges B5 and B8.

Binds to 23S rRNA. Forms part of two intersubunit bridges in the 70S ribosome. This Thermodesulfovibrio yellowstonii (strain ATCC 51303 / DSM 11347 / YP87) protein is Large ribosomal subunit protein uL14.